Consider the following 337-residue polypeptide: 4-hydroxyproline 2-epimerase (337 aa).

Residue C91 is the Proton acceptor of the active site. Substrate contacts are provided by residues 92-93 (GH), D252, and 257-258 (GT).

The protein belongs to the proline racemase family.

The catalysed reaction is trans-4-hydroxy-L-proline = cis-4-hydroxy-D-proline. Functionally, catalyzes the epimerization of trans-4-hydroxy-L-proline (t4LHyp) to cis-4-hydroxy-D-proline (c4DHyp). Is likely involved in a degradation pathway that converts t4LHyp to alpha-ketoglutarate. Displays no proline racemase activity. The chain is 4-hydroxyproline 2-epimerase from Cereibacter sphaeroides (strain ATCC 17029 / ATH 2.4.9) (Rhodobacter sphaeroides).